The primary structure comprises 126 residues: Holo-[acyl-carrier-protein] synthase (126 aa).

Mg(2+) contacts are provided by D9 and E58.

This sequence belongs to the P-Pant transferase superfamily. AcpS family. It depends on Mg(2+) as a cofactor.

The protein localises to the cytoplasm. It carries out the reaction apo-[ACP] + CoA = holo-[ACP] + adenosine 3',5'-bisphosphate + H(+). Transfers the 4'-phosphopantetheine moiety from coenzyme A to a Ser of acyl-carrier-protein. This Vibrio vulnificus (strain YJ016) protein is Holo-[acyl-carrier-protein] synthase.